The primary structure comprises 355 residues: Apyrase apy-1 (355 aa).

Topologically, residues 1 to 6 (MTQESN) are cytoplasmic. The chain crosses the membrane as a helical; Signal-anchor for type II membrane protein span at residues 7-29 (SNFFNFLLFGFVTAIAFYSGTQF). N30 carries N-linked (GlcNAc...) asparagine glycosylation. The Lumenal segment spans residues 30–355 (NKSSEQEEHI…PYKYEGIAFA (326 aa)). The Ca(2+) site is built by S119, E166, and E235. N291 is a glycosylation site (N-linked (GlcNAc...) asparagine). E350 contacts Ca(2+).

The protein belongs to the apyrase family. Ca(2+) is required as a cofactor.

The protein localises to the endomembrane system. It catalyses the reaction a ribonucleoside 5'-diphosphate + H2O = a ribonucleoside 5'-phosphate + phosphate + H(+). Hydrolyzes UDP and to a lesser extent GDP. By preventing the accumulation of NDP, may promote the reglucosylation of incompletely folded glycoproteins in the endoplasmic reticulum following the unfolded protein response. This is Apyrase apy-1 from Caenorhabditis elegans.